The sequence spans 466 residues: Cysteine--tRNA ligase (466 aa).

C33 contacts Zn(2+). Residues 35-45 carry the 'HIGH' region motif; that stretch reads PTVYDYAHIGN. Positions 221, 246, and 250 each coordinate Zn(2+). The short motif at 279-283 is the 'KMSKS' region element; sequence KMSKS. K282 contacts ATP.

The protein belongs to the class-I aminoacyl-tRNA synthetase family. Monomer. It depends on Zn(2+) as a cofactor.

The protein localises to the cytoplasm. The enzyme catalyses tRNA(Cys) + L-cysteine + ATP = L-cysteinyl-tRNA(Cys) + AMP + diphosphate. This Rhizobium meliloti (strain 1021) (Ensifer meliloti) protein is Cysteine--tRNA ligase.